The primary structure comprises 600 residues: ATP-dependent lipid A-core flippase (600 aa).

A run of 6 helical transmembrane segments spans residues 28-48, 80-100, 159-179, 182-202, 267-287, and 295-315; these read TLSI…IAFI, VMLM…VANF, ALIS…LMFF, WKLS…ISIV, VSQP…LYAA, and ELTA…LQPI. Residues 29 to 327 enclose the ABC transmembrane type-1 domain; that stretch reads LSILGLIVYG…LTRVNAEFQR (299 aa). Residues 359–596 enclose the ABC transporter domain; it reads LRFDNVSFSY…KGAYAGLYQM (238 aa). 393–400 is a binding site for ATP; it reads GRSGSGKS.

Belongs to the ABC transporter superfamily. Lipid exporter (TC 3.A.1.106) family. In terms of assembly, homodimer.

It localises to the cell inner membrane. It carries out the reaction ATP + H2O + lipid A-core oligosaccharideSide 1 = ADP + phosphate + lipid A-core oligosaccharideSide 2.. Functionally, involved in lipopolysaccharide (LPS) biosynthesis. Translocates lipid A-core from the inner to the outer leaflet of the inner membrane. Transmembrane domains (TMD) form a pore in the inner membrane and the ATP-binding domain (NBD) is responsible for energy generation. In Shewanella denitrificans (strain OS217 / ATCC BAA-1090 / DSM 15013), this protein is ATP-dependent lipid A-core flippase.